We begin with the raw amino-acid sequence, 200 residues long: Peptidyl-tRNA hydrolase (200 aa).

Position 23 (Tyr23) interacts with tRNA. His28 serves as the catalytic Proton acceptor. Positions 79, 81, and 127 each coordinate tRNA.

Belongs to the PTH family. Monomer.

It is found in the cytoplasm. The catalysed reaction is an N-acyl-L-alpha-aminoacyl-tRNA + H2O = an N-acyl-L-amino acid + a tRNA + H(+). Functionally, hydrolyzes ribosome-free peptidyl-tRNAs (with 1 or more amino acids incorporated), which drop off the ribosome during protein synthesis, or as a result of ribosome stalling. In terms of biological role, catalyzes the release of premature peptidyl moieties from peptidyl-tRNA molecules trapped in stalled 50S ribosomal subunits, and thus maintains levels of free tRNAs and 50S ribosomes. The protein is Peptidyl-tRNA hydrolase of Streptomyces coelicolor (strain ATCC BAA-471 / A3(2) / M145).